The primary structure comprises 303 residues: UDP-N-acetylenolpyruvoylglucosamine reductase (303 aa).

One can recognise an FAD-binding PCMH-type domain in the interval 23-188 (KVGGPADYLV…ISAKFALKPG (166 aa)). Arg167 is a catalytic residue. The Proton donor role is filled by Ser217. Residue Glu287 is part of the active site.

It belongs to the MurB family. FAD serves as cofactor.

Its subcellular location is the cytoplasm. The enzyme catalyses UDP-N-acetyl-alpha-D-muramate + NADP(+) = UDP-N-acetyl-3-O-(1-carboxyvinyl)-alpha-D-glucosamine + NADPH + H(+). It participates in cell wall biogenesis; peptidoglycan biosynthesis. In terms of biological role, cell wall formation. The polypeptide is UDP-N-acetylenolpyruvoylglucosamine reductase (Streptococcus uberis (strain ATCC BAA-854 / 0140J)).